The primary structure comprises 183 residues: Capsid protein (183 aa).

The disordered stretch occupies residues 136-183 (NAPILSTLPETTVVRRRGRSPRRRTPSPRRRRSQSPRRRRSQSRESQC). A compositionally biased stretch (basic residues) spans 149–176 (VRRRGRSPRRRTPSPRRRRSQSPRRRRS). 3 positions are modified to phosphoserine; by host: Ser-155, Ser-162, and Ser-170. One copy of the 1; half-length repeat lies at 155–161 (SPRRRTP). Residues 155-177 (SPRRRTPSPRRRRSQSPRRRRSQ) are 3 X 8 AA repeats of S-P-R-R-R-[PR]-S-Q. The short motif at 158–175 (RRTPSPRRRRSQSPRRRR) is the Bipartite nuclear localization signal element. 2 tandem repeats follow at residues 162–169 (SPRRRRSQ) and 170–177 (SPRRRRSQ). Residues 177–183 (QSRESQC) form an RNA binding region.

Belongs to the orthohepadnavirus core antigen family. As to quaternary structure, homodimerizes, then multimerizes. Interacts with cytosol exposed regions of viral L glycoprotein present in the reticulum-to-Golgi compartment. Interacts with human FLNB. Phosphorylated form interacts with host importin alpha; this interaction depends on the exposure of the NLS, which itself depends upon genome maturation and/or phosphorylation of the capsid protein. Interacts with host NUP153. In terms of processing, phosphorylated by host SRPK1, SRPK2, and maybe protein kinase C or GAPDH. Phosphorylation is critical for pregenomic RNA packaging. Protein kinase C phosphorylation is stimulated by HBx protein and may play a role in transport of the viral genome to the nucleus at the late step during the viral replication cycle.

It is found in the virion. The protein resides in the host cytoplasm. In terms of biological role, self assembles to form an icosahedral capsid. Most capsids appear to be large particles with an icosahedral symmetry of T=4 and consist of 240 copies of capsid protein, though a fraction forms smaller T=3 particles consisting of 180 capsid proteins. Entering capsids are transported along microtubules to the nucleus. Phosphorylation of the capsid is thought to induce exposure of nuclear localization signal in the C-terminal portion of the capsid protein that allows binding to the nuclear pore complex via the importin (karyopherin-) alpha and beta. Capsids are imported in intact form through the nuclear pore into the nuclear basket, where it probably binds NUP153. Only capsids that contain the mature viral genome can release the viral DNA and capsid protein into the nucleoplasm. Immature capsids get stuck in the basket. Capsids encapsulate the pre-genomic RNA and the P protein. Pre-genomic RNA is reverse-transcribed into DNA while the capsid is still in the cytoplasm. The capsid can then either be directed to the nucleus, providing more genomes for transcription, or bud through the endoplasmic reticulum to provide new virions. This is Capsid protein from Hepatitis B virus genotype B2 (isolate Indonesia/pIDW420/1988) (HBV-B).